A 299-amino-acid chain; its full sequence is MTAFQNAGPSITRLAPAKINLALHVTGRRDDGYHLLDMLVVFADQGDRIHIEKAGSDSFTVSGPFASGIPAGRGNLVLKARDALRQHGGPDLSPVAIHLEKNLPIASGIGGGSSDAAATLLALNTLWQLDLDFEMLAAIGLSLGADLPMCLHGAAHGTPLIARGIGEELNDVSGIAALPMLLVNDGTALATPDVFRALTRRENAPLPPPACEGTDALCAYLRETRNDLLPAAISLAPQIEPKLALLRAKGALYARMSGSGATCFAIFSDKSALTRAAKEIADENPGWFAVPSHSFPSRA.

Residue K18 is part of the active site. 104 to 114 (PIASGIGGGSS) serves as a coordination point for ATP. D146 is a catalytic residue.

It belongs to the GHMP kinase family. IspE subfamily.

It catalyses the reaction 4-CDP-2-C-methyl-D-erythritol + ATP = 4-CDP-2-C-methyl-D-erythritol 2-phosphate + ADP + H(+). Its pathway is isoprenoid biosynthesis; isopentenyl diphosphate biosynthesis via DXP pathway; isopentenyl diphosphate from 1-deoxy-D-xylulose 5-phosphate: step 3/6. Catalyzes the phosphorylation of the position 2 hydroxy group of 4-diphosphocytidyl-2C-methyl-D-erythritol. This chain is 4-diphosphocytidyl-2-C-methyl-D-erythritol kinase, found in Brucella melitensis biotype 1 (strain ATCC 23456 / CCUG 17765 / NCTC 10094 / 16M).